The primary structure comprises 484 residues: Glycogen synthase (484 aa).

Lys-15 is a binding site for ADP-alpha-D-glucose.

This sequence belongs to the glycosyltransferase 1 family. Bacterial/plant glycogen synthase subfamily.

It catalyses the reaction [(1-&gt;4)-alpha-D-glucosyl](n) + ADP-alpha-D-glucose = [(1-&gt;4)-alpha-D-glucosyl](n+1) + ADP + H(+). It functions in the pathway glycan biosynthesis; glycogen biosynthesis. In terms of biological role, synthesizes alpha-1,4-glucan chains using ADP-glucose. This chain is Glycogen synthase, found in Koribacter versatilis (strain Ellin345).